The following is a 417-amino-acid chain: uncharacterized protein (417 aa).

10 consecutive transmembrane segments (helical) span residues 21–41 (ISSL…AFQL), 50–70 (LLMM…GLLA), 88–108 (LTVI…LLSV), 166–186 (SVFY…FFLP), 217–237 (MPLL…LQIG), 255–275 (LAGW…AITG), 283–303 (LLYF…APFL), 308–328 (IAGI…FGLV), 351–371 (AIQS…GVLA), and 373–393 (WIGV…IGLI).

It belongs to the major facilitator superfamily. TCR/Tet family.

Its subcellular location is the cell membrane. This is an uncharacterized protein from Bacillus subtilis (strain 168).